Consider the following 762-residue polypeptide: Polyribonucleotide nucleotidyltransferase (762 aa).

Residues D531 and D537 each coordinate Mg(2+). One can recognise a KH domain in the interval 597–656 (PRVTTIKVPVDKIGEVIGPKGKVINSITEETRAQISIEDDGTVFVGATDGPSAQAAIDKI). The S1 motif domain occupies 668–737 (GERFLGTVVK…KRGKISLVLV (70 aa)).

Belongs to the polyribonucleotide nucleotidyltransferase family. The cofactor is Mg(2+).

The protein resides in the cytoplasm. The catalysed reaction is RNA(n+1) + phosphate = RNA(n) + a ribonucleoside 5'-diphosphate. Functionally, involved in mRNA degradation. Catalyzes the phosphorolysis of single-stranded polyribonucleotides processively in the 3'- to 5'-direction. The protein is Polyribonucleotide nucleotidyltransferase of Mycobacterium ulcerans (strain Agy99).